A 280-amino-acid chain; its full sequence is 2,3,4,5-tetrahydropyridine-2,6-dicarboxylate N-succinyltransferase (280 aa).

Belongs to the transferase hexapeptide repeat family.

The protein localises to the cytoplasm. The enzyme catalyses (S)-2,3,4,5-tetrahydrodipicolinate + succinyl-CoA + H2O = (S)-2-succinylamino-6-oxoheptanedioate + CoA. It functions in the pathway amino-acid biosynthesis; L-lysine biosynthesis via DAP pathway; LL-2,6-diaminopimelate from (S)-tetrahydrodipicolinate (succinylase route): step 1/3. The sequence is that of 2,3,4,5-tetrahydropyridine-2,6-dicarboxylate N-succinyltransferase from Methylorubrum populi (strain ATCC BAA-705 / NCIMB 13946 / BJ001) (Methylobacterium populi).